A 124-amino-acid chain; its full sequence is Small ribosomal subunit protein uS12 (124 aa).

Asp-89 is modified (3-methylthioaspartic acid).

The protein belongs to the universal ribosomal protein uS12 family. Part of the 30S ribosomal subunit. Contacts proteins S8 and S17. May interact with IF1 in the 30S initiation complex.

In terms of biological role, with S4 and S5 plays an important role in translational accuracy. Interacts with and stabilizes bases of the 16S rRNA that are involved in tRNA selection in the A site and with the mRNA backbone. Located at the interface of the 30S and 50S subunits, it traverses the body of the 30S subunit contacting proteins on the other side and probably holding the rRNA structure together. The combined cluster of proteins S8, S12 and S17 appears to hold together the shoulder and platform of the 30S subunit. This Moorella thermoacetica (strain ATCC 39073 / JCM 9320) protein is Small ribosomal subunit protein uS12.